The sequence spans 417 residues: Serine hydroxymethyltransferase (417 aa).

Residues L121 and 125 to 127 (GHL) contribute to the (6S)-5,6,7,8-tetrahydrofolate site. K229 carries the post-translational modification N6-(pyridoxal phosphate)lysine. 355–357 (SPF) provides a ligand contact to (6S)-5,6,7,8-tetrahydrofolate.

It belongs to the SHMT family. In terms of assembly, homodimer. Pyridoxal 5'-phosphate serves as cofactor.

It localises to the cytoplasm. It carries out the reaction (6R)-5,10-methylene-5,6,7,8-tetrahydrofolate + glycine + H2O = (6S)-5,6,7,8-tetrahydrofolate + L-serine. It participates in one-carbon metabolism; tetrahydrofolate interconversion. Its pathway is amino-acid biosynthesis; glycine biosynthesis; glycine from L-serine: step 1/1. Its function is as follows. Catalyzes the reversible interconversion of serine and glycine with tetrahydrofolate (THF) serving as the one-carbon carrier. This reaction serves as the major source of one-carbon groups required for the biosynthesis of purines, thymidylate, methionine, and other important biomolecules. Also exhibits THF-independent aldolase activity toward beta-hydroxyamino acids, producing glycine and aldehydes, via a retro-aldol mechanism. This is Serine hydroxymethyltransferase from Yersinia enterocolitica serotype O:8 / biotype 1B (strain NCTC 13174 / 8081).